Here is a 426-residue protein sequence, read N- to C-terminus: Dihydroorotase (426 aa).

Zn(2+)-binding residues include H58 and H60. Substrate is bound by residues 60–62 (HLR) and N92. Residues D150, H177, and H230 each contribute to the Zn(2+) site. N276 serves as a coordination point for substrate. A Zn(2+)-binding site is contributed by D303. Residue D303 is part of the active site. Substrate-binding positions include H307 and 321–322 (FG).

This sequence belongs to the metallo-dependent hydrolases superfamily. DHOase family. Class I DHOase subfamily. Requires Zn(2+) as cofactor.

The enzyme catalyses (S)-dihydroorotate + H2O = N-carbamoyl-L-aspartate + H(+). It functions in the pathway pyrimidine metabolism; UMP biosynthesis via de novo pathway; (S)-dihydroorotate from bicarbonate: step 3/3. In terms of biological role, catalyzes the reversible cyclization of carbamoyl aspartate to dihydroorotate. This Listeria innocua serovar 6a (strain ATCC BAA-680 / CLIP 11262) protein is Dihydroorotase.